A 684-amino-acid chain; its full sequence is Calpain-14 (684 aa).

In terms of domain architecture, Calpain catalytic spans 43 to 336; the sequence is LFEDTSFPAT…FVLLVICKLT (294 aa). Active-site residues include Cys-101, His-254, and Asn-278. The segment at 337–503 is domain III; the sequence is PGLLSQEAAQ…KHIFYEIGSN (167 aa). The interval 504 to 517 is linker; that stretch reads SGVVFSKEIEDQNE. Residues 518–683 are domain IV; the sequence is RQDEFFTKFF…KPEWMMMALY (166 aa). 3 consecutive EF-hand domains span residues 557–592, 586–621, and 651–684; these read FSLE…LKLS, WKQL…AGIM, and LRVE…ALYS. Ca(2+) is bound by residues Asp-570, Asn-572, Ser-574, Thr-576, and Glu-581.

The protein belongs to the peptidase C2 family. As to expression, not expressed in tissues tested.

Functionally, calcium-regulated non-lysosomal thiol-protease. The sequence is that of Calpain-14 (CAPN14) from Homo sapiens (Human).